Consider the following 393-residue polypeptide: MAVPTTRKDLMIVNMGPHHPSMHGVLRLIVTLDGEDVIDCEPIVGYLHRGMEKIAENRTIIQYLPYVTRWDYLATMFTEAITVNGPEQLGNIQVPKRASYIRVIMLELSRIASHLLWLGPFMADIGAQTPFFYILRERELIYDLFEAATGMRMMHNYFRIGGVAADLPYGWIDKCLDFCDYFLIGLTEYQKLITRNPIFLERVENVGIIGGEEAINWGLSGPMLRASGIQWDLRKVDHYECYDEFDWEVQWQKEGDSLARYLIRIGEMAESVKIIQQALEGIPGGPYENLEIRRFNRIKYPEWNDFEYRFISKKPSPAFELSKQELYVRVEAPKGELGIFLIGDQSVFPWRWKIRPPGFINLQILPQLVKKMKLADIMTILGSIDIIMGEVDR.

It belongs to the complex I 49 kDa subunit family. NDH is composed of at least 16 different subunits, 5 of which are encoded in the nucleus.

Its subcellular location is the plastid. The protein resides in the chloroplast thylakoid membrane. The enzyme catalyses a plastoquinone + NADH + (n+1) H(+)(in) = a plastoquinol + NAD(+) + n H(+)(out). It carries out the reaction a plastoquinone + NADPH + (n+1) H(+)(in) = a plastoquinol + NADP(+) + n H(+)(out). Functionally, NDH shuttles electrons from NAD(P)H:plastoquinone, via FMN and iron-sulfur (Fe-S) centers, to quinones in the photosynthetic chain and possibly in a chloroplast respiratory chain. The immediate electron acceptor for the enzyme in this species is believed to be plastoquinone. Couples the redox reaction to proton translocation, and thus conserves the redox energy in a proton gradient. The sequence is that of NAD(P)H-quinone oxidoreductase subunit H, chloroplastic from Spinacia oleracea (Spinach).